Consider the following 380-residue polypeptide: Cytochrome b (380 aa).

4 consecutive transmembrane segments (helical) span residues 34–54 (FGSLLGICLATQILTGLLLAM), 78–99 (WLIRNLHANGASFFFICIYLHI), 114–134 (WNTGILLLLTLMATAFVGYVL), and 179–199 (FFALHFLLPFVIAGLTLIHLT). Residues His-84 and His-98 each coordinate heme b. Heme b-binding residues include His-183 and His-197. His-202 serves as a coordination point for a ubiquinone. 4 helical membrane passes run 227-247 (LKDILGFMLMFLSLTTLALFS), 289-309 (LGGVLALAASVLMMFLSPLLH), 321-341 (LSQLLFWTLVANLFILTWVGS), and 348-368 (FIIIGQLASFTYFTILLILLP).

This sequence belongs to the cytochrome b family. In terms of assembly, the cytochrome bc1 complex contains 11 subunits: 3 respiratory subunits (MT-CYB, CYC1 and UQCRFS1), 2 core proteins (UQCRC1 and UQCRC2) and 6 low-molecular weight proteins (UQCRH/QCR6, UQCRB/QCR7, UQCRQ/QCR8, UQCR10/QCR9, UQCR11/QCR10 and a cleavage product of UQCRFS1). This cytochrome bc1 complex then forms a dimer. Heme b serves as cofactor.

The protein resides in the mitochondrion inner membrane. Functionally, component of the ubiquinol-cytochrome c reductase complex (complex III or cytochrome b-c1 complex) that is part of the mitochondrial respiratory chain. The b-c1 complex mediates electron transfer from ubiquinol to cytochrome c. Contributes to the generation of a proton gradient across the mitochondrial membrane that is then used for ATP synthesis. This Pelagodroma marina (White-faced storm-petrel) protein is Cytochrome b (MT-CYB).